Consider the following 361-residue polypeptide: Oxidoreductase lepF (361 aa).

The helical transmembrane segment at 257-277 (MLMLVLQAVLLPVFYVVAMPL) threads the bilayer.

It belongs to the NmrA-type oxidoreductase family.

The protein localises to the membrane. Oxidoreductase; part of the gene cluster 23 that mediates the biosynthesis of a family of 2-pyridones known as leporins. The hybrid PKS-NRPS synthetase lepA and the enoyl reductase lepG are responsible for fusion of phenylalanine with a hexaketide and subsequent release of the stable tetramic acid precursor, pre-leporin C. Because lepA lacks a designated enoylreductase (ER) domain, the required activity is provided the enoyl reductase lepG. It is possible that the dehydrogenase lepF also participates in production of pre-leporin C. Cytochrome P450 monooxygenase lepH is then required for the ring expansion step to yield leporin C. Leporin C is then presumably further oxidized by the N-hydroxylase lepD to form leporin B. LepI may possess a function in biosynthesis upstream of lepA. Leporin B is further oxidized in the presence of ferric ion to give the leporin B trimer-iron chelate, but whether or not this reaction is catalyzed by an enzyme in the pathway or by ferric ion is not determined yet. This is Oxidoreductase lepF from Aspergillus flavus (strain ATCC 200026 / FGSC A1120 / IAM 13836 / NRRL 3357 / JCM 12722 / SRRC 167).